The primary structure comprises 314 residues: Cytochrome f (314 aa).

Positions 1 to 30 (MATNKFFKSLLFALTIAINSFGFCIQDAVA) are cleaved as a signal peptide. Heme is bound by residues Tyr31, Cys51, Cys54, and His55. Residues 280 to 300 (IYGYLAFCFSVLITQIMLVLK) form a helical membrane-spanning segment.

Belongs to the cytochrome f family. The 4 large subunits of the cytochrome b6-f complex are cytochrome b6, subunit IV (17 kDa polypeptide, petD), cytochrome f and the Rieske protein, while the 4 small subunits are PetG, PetL, PetM and PetN. The complex functions as a dimer. Heme serves as cofactor.

The protein resides in the plastid. It localises to the chloroplast thylakoid membrane. Component of the cytochrome b6-f complex, which mediates electron transfer between photosystem II (PSII) and photosystem I (PSI), cyclic electron flow around PSI, and state transitions. The sequence is that of Cytochrome f from Phaeodactylum tricornutum (strain CCAP 1055/1).